Consider the following 260-residue polypeptide: Ribonuclease 3 (260 aa).

One can recognise an RNase III domain in the interval 16 to 145 (VQLLESRLGL…VFGAVFLTSG (130 aa)). Residue Glu-58 participates in Mg(2+) binding. The active site involves Asp-62. Mg(2+)-binding residues include Asp-131 and Glu-134. Residue Glu-134 is part of the active site. Residues 172-241 (DYKTLLQEMA…AQATLEKLRE (70 aa)) form the DRBM domain. A disordered region spans residues 219–260 (ATGRSKKEAEQSAAQATLEKLREDAACPTSPPPGTPRHDTPA).

Belongs to the ribonuclease III family. In terms of assembly, homodimer. Requires Mg(2+) as cofactor.

It is found in the cytoplasm. The catalysed reaction is Endonucleolytic cleavage to 5'-phosphomonoester.. Functionally, digests double-stranded RNA. Involved in the processing of primary rRNA transcript to yield the immediate precursors to the large and small rRNAs (23S and 16S). Processes some mRNAs, and tRNAs when they are encoded in the rRNA operon. Processes pre-crRNA and tracrRNA of type II CRISPR loci if present in the organism. In Myxococcus xanthus (strain DK1622), this protein is Ribonuclease 3.